The sequence spans 174 residues: Thiol-disulfide oxidoreductase ResA (174 aa).

The helical; Signal-anchor for type II membrane protein transmembrane segment at 11–30 threads the bilayer; it reads TAILLVLLAAIGYTIYTNFF. One can recognise a Thioredoxin domain in the interval 36–174; that stretch reads VAVGSTAPDF…IERHLESIKP (139 aa). An intrachain disulfide couples Cys74 to Cys77.

The protein belongs to the thioredoxin family. ResA subfamily.

Its subcellular location is the cell membrane. Its pathway is protein modification; cytochrome c assembly. In terms of biological role, thiol-disulfide oxidoreductase which is required in disulfide reduction during c-type cytochrome synthesis. May accept reducing equivalents from CcdA, leading to breakage of disulfide bonds in apocytochrome c; following this reduction heme can be covalently attached. The polypeptide is Thiol-disulfide oxidoreductase ResA (Geobacillus kaustophilus (strain HTA426)).